A 600-amino-acid polypeptide reads, in one-letter code: Aspartate--tRNA(Asp/Asn) ligase (600 aa).

Glu183 is a binding site for L-aspartate. The interval 207 to 210 is aspartate; it reads QLFK. Position 229 (Arg229) interacts with L-aspartate. ATP-binding positions include 229-231 and Gln238; that span reads RDE. His456 is a binding site for L-aspartate. Glu490 contacts ATP. Arg497 is an L-aspartate binding site. 542 to 545 is an ATP binding site; it reads GLDR.

The protein belongs to the class-II aminoacyl-tRNA synthetase family. Type 1 subfamily. Homodimer.

The protein resides in the cytoplasm. It catalyses the reaction tRNA(Asx) + L-aspartate + ATP = L-aspartyl-tRNA(Asx) + AMP + diphosphate. In terms of biological role, aspartyl-tRNA synthetase with relaxed tRNA specificity since it is able to aspartylate not only its cognate tRNA(Asp) but also tRNA(Asn). Reaction proceeds in two steps: L-aspartate is first activated by ATP to form Asp-AMP and then transferred to the acceptor end of tRNA(Asp/Asn). The polypeptide is Aspartate--tRNA(Asp/Asn) ligase (Moorella thermoacetica (strain ATCC 39073 / JCM 9320)).